The following is a 447-amino-acid chain: N-succinylarginine dihydrolase (447 aa).

Residues 19-28, Asn110, and 137-138 each bind substrate; these read AGLSFGNEAS and HR. Glu174 is a catalytic residue. Residue Arg212 coordinates substrate. Residue His248 is part of the active site. 2 residues coordinate substrate: Asp250 and Asn359. The Nucleophile role is filled by Cys365.

Belongs to the succinylarginine dihydrolase family. As to quaternary structure, homodimer.

The enzyme catalyses N(2)-succinyl-L-arginine + 2 H2O + 2 H(+) = N(2)-succinyl-L-ornithine + 2 NH4(+) + CO2. It functions in the pathway amino-acid degradation; L-arginine degradation via AST pathway; L-glutamate and succinate from L-arginine: step 2/5. Its function is as follows. Catalyzes the hydrolysis of N(2)-succinylarginine into N(2)-succinylornithine, ammonia and CO(2). This is N-succinylarginine dihydrolase from Salmonella paratyphi A (strain ATCC 9150 / SARB42).